The chain runs to 130 residues: B1 protein (130 aa).

Residues 1–12 (LTSLILLVAVQA) form the signal peptide. 2 cysteine pairs are disulfide-bonded: C28–C59 and C99–C116.

This sequence belongs to the PBP/GOBP family. Post-translationally, N-glycosylated. As to expression, tubular accessory sex gland.

It localises to the secreted. Functionally, may be a carrier protein for lipids. This chain is B1 protein, found in Tenebrio molitor (Yellow mealworm beetle).